We begin with the raw amino-acid sequence, 105 residues long: RxLR effector protein PITG_18670 (105 aa).

A signal peptide spans 1 to 21 (MRSIFYFALAFAALTCSNASA). The RxLR-dEER signature appears at 39 to 57 (RSLRVAGQEVARGDRGEEI).

It belongs to the RxLR effector family.

The protein resides in the secreted. It localises to the host nucleus. It is found in the host nucleolus. Its subcellular location is the host cytoplasm. Functionally, effector that enhances P.infestans colonization of Nicotiana benthamiana leaves. This is RxLR effector protein PITG_18670 from Phytophthora infestans (strain T30-4) (Potato late blight agent).